Reading from the N-terminus, the 535-residue chain is CTP synthase (535 aa).

Residues 1 to 267 (MTKYIFVTGG…DQIVCDHLKL (267 aa)) form an amidoligase domain region. Residue Ser-13 participates in CTP binding. UTP is bound at residue Ser-13. 14–19 (SLGKGI) contacts ATP. Tyr-54 contributes to the L-glutamine binding site. Asp-71 is an ATP binding site. Mg(2+)-binding residues include Asp-71 and Glu-141. CTP contacts are provided by residues 148 to 150 (DIE), 188 to 193 (KTKPTQ), and Lys-224. Residues 188 to 193 (KTKPTQ) and Lys-224 contribute to the UTP site. Residue 240-242 (RDA) coordinates ATP. Positions 292-534 (KIALVGKYVE…VRASITNKES (243 aa)) constitute a Glutamine amidotransferase type-1 domain. Residue Gly-354 participates in L-glutamine binding. Cys-381 functions as the Nucleophile; for glutamine hydrolysis in the catalytic mechanism. L-glutamine-binding positions include 382 to 385 (LGMQ), Glu-405, and Arg-462. Catalysis depends on residues His-507 and Glu-509.

The protein belongs to the CTP synthase family. In terms of assembly, homotetramer.

It catalyses the reaction UTP + L-glutamine + ATP + H2O = CTP + L-glutamate + ADP + phosphate + 2 H(+). It carries out the reaction L-glutamine + H2O = L-glutamate + NH4(+). The catalysed reaction is UTP + NH4(+) + ATP = CTP + ADP + phosphate + 2 H(+). The protein operates within pyrimidine metabolism; CTP biosynthesis via de novo pathway; CTP from UDP: step 2/2. Its activity is regulated as follows. Allosterically activated by GTP, when glutamine is the substrate; GTP has no effect on the reaction when ammonia is the substrate. The allosteric effector GTP functions by stabilizing the protein conformation that binds the tetrahedral intermediate(s) formed during glutamine hydrolysis. Inhibited by the product CTP, via allosteric rather than competitive inhibition. Functionally, catalyzes the ATP-dependent amination of UTP to CTP with either L-glutamine or ammonia as the source of nitrogen. Regulates intracellular CTP levels through interactions with the four ribonucleotide triphosphates. This is CTP synthase from Bacillus cereus (strain ATCC 10987 / NRS 248).